The following is a 100-amino-acid chain: Double-stranded DNA-binding protein (100 aa).

A DNA-binding region spans residues Met1–Met19.

Homodimer. Homomultimer. Binds to double-stranded DNA giving rise to multimeric nucleoprotein complexes.

Its function is as follows. Histone-like nucleoprotein that binds to the viral dsDNA and responsible for wrapping and condensing the viral DNA about 4-fold. Forms a nucleoprotein complex in which the DNA adopts a right-handed toroidal conformation winding around a protein core. Binding specificity for the viral genome is based on supercoiling. The formation of the nucleoprotein complex at the genome ends, for which the binding affinity is highest, activates the initiation of viral DNA replication. The binding of p6 would recruit the complex formed by the TP and the DNA polymerase to the origin. Protein p6 is also involved in the early to late transcription switch. The protein is Double-stranded DNA-binding protein of Bacillus phage Nf (Bacteriophage Nf).